The chain runs to 256 residues: Pimeloyl-[acyl-carrier protein] methyl ester esterase (256 aa).

The AB hydrolase-1 domain occupies 15–242 (HLVLLHGWGL…AAHAPFISHP (228 aa)). Substrate contacts are provided by residues W22, 82–83 (SL), and 143–147 (FLALQ). S82 functions as the Nucleophile in the catalytic mechanism. Active-site residues include D207 and H235. Residue H235 participates in substrate binding.

This sequence belongs to the AB hydrolase superfamily. Carboxylesterase BioH family. Monomer.

The protein localises to the cytoplasm. It carries out the reaction 6-carboxyhexanoyl-[ACP] methyl ester + H2O = 6-carboxyhexanoyl-[ACP] + methanol + H(+). The protein operates within cofactor biosynthesis; biotin biosynthesis. Functionally, the physiological role of BioH is to remove the methyl group introduced by BioC when the pimeloyl moiety is complete. It allows to synthesize pimeloyl-ACP via the fatty acid synthetic pathway through the hydrolysis of the ester bonds of pimeloyl-ACP esters. This is Pimeloyl-[acyl-carrier protein] methyl ester esterase from Escherichia coli O157:H7.